We begin with the raw amino-acid sequence, 1488 residues long: Neuropathy target esterase sws (1488 aa).

Topologically, residues methionine 1–threonine 34 are lumenal. The helical transmembrane segment at threonine 35–phenylalanine 55 threads the bilayer. The Cytoplasmic portion of the chain corresponds to lysine 56–asparagine 1488. Isoleucine 175–arginine 302 is an a nucleoside 3',5'-cyclic phosphate binding site. Disordered stretches follow at residues proline 339–proline 379 and glutamine 402–threonine 440. 2 stretches are compositionally biased toward low complexity: residues serine 344–arginine 356 and glutamine 402–glycine 413. A compositionally biased stretch (polar residues) spans histidine 415–threonine 424. A nucleoside 3',5'-cyclic phosphate is bound by residues glutamate 458 to arginine 587 and isoleucine 576 to arginine 703. One can recognise a PNPLA domain in the interval leucine 929–arginine 1095. The GXGXXG motif lies at glycine 933–glycine 938. Positions glycine 960 to glycine 964 match the GXSXG motif. Serine 962 acts as the Nucleophile in catalysis. Aspartate 1082 (proton acceptor) is an active-site residue. The DGA/G signature appears at aspartate 1082–glycine 1084. Serine 1176 is subject to Phosphoserine. Disordered stretches follow at residues arginine 1348–leucine 1376 and glutamate 1398–asparagine 1488. The segment covering histidine 1399–aspartate 1410 has biased composition (basic residues). Residues isoleucine 1440 to glutamine 1452 are compositionally biased toward basic and acidic residues. Residues glutamine 1456–glutamine 1470 are compositionally biased toward acidic residues.

Belongs to the NTE family. As to quaternary structure, interacts with Pka-C3; interaction inhibits the catalytic function of Pka-C3 and the esterase activity of sws.

It localises to the endoplasmic reticulum membrane. It carries out the reaction a 1-acyl-sn-glycero-3-phosphocholine + H2O = sn-glycerol 3-phosphocholine + a fatty acid + H(+). Its function is as follows. Phospholipase B that deacylates intracellular phosphatidylcholine (PtdCho), generating glycerophosphocholine (GroPtdCho). This deacylation occurs at both sn-2 and sn-1 positions of PtdCho. Its specific chemical modification by certain organophosphorus (OP) compounds leads to distal axonopathy. Plays a role in the signaling mechanism between neurons and glia that regulates glia wrapping during development of the adult brain. Essential for membrane lipid homeostasis and cell survival in both neurons and glia of the adult brain. The polypeptide is Neuropathy target esterase sws (Drosophila mojavensis (Fruit fly)).